We begin with the raw amino-acid sequence, 215 residues long: E3 ubiquitin-protein ligase znrf1 (215 aa).

Disordered stretches follow at residues 1–39 and 66–96; these read MGGK…PGGT and YTPR…ETGG. Gly-2 carries N-myristoyl glycine lipidation. The RING-type; atypical zinc-finger motif lies at 172 to 213; sequence CVICLEELQQGDTIARLPCLCIYHKSCIDSWFEINRSCPEHP.

Its subcellular location is the endosome. It is found in the lysosome. It localises to the membrane. The catalysed reaction is S-ubiquitinyl-[E2 ubiquitin-conjugating enzyme]-L-cysteine + [acceptor protein]-L-lysine = [E2 ubiquitin-conjugating enzyme]-L-cysteine + N(6)-ubiquitinyl-[acceptor protein]-L-lysine.. It participates in protein modification; protein ubiquitination. E3 ubiquitin-protein ligase that plays a role in neuron cells differentiation. Plays a role in the establishment and maintenance of neuronal transmission and plasticity. In Danio rerio (Zebrafish), this protein is E3 ubiquitin-protein ligase znrf1 (znrf1).